Reading from the N-terminus, the 338-residue chain is Putative peptide import ATP-binding protein BOV_A0348 (338 aa).

One can recognise an ABC transporter domain in the interval 10–263 (KGLRTVFRTR…PRHPYTMGLL (254 aa)). Position 43–50 (43–50 (GESGSGKS)) interacts with ATP.

This sequence belongs to the ABC transporter superfamily. As to quaternary structure, the complex is composed of two ATP-binding proteins (BOV_A0347 and BOV_A0348), two transmembrane proteins (BOV_A0350 and BOV_A0351) and a solute-binding protein (BOV_A0352).

It localises to the cell inner membrane. Probably part of an ABC transporter complex that could be involved in peptide import. Probably responsible for energy coupling to the transport system. The chain is Putative peptide import ATP-binding protein BOV_A0348 from Brucella ovis (strain ATCC 25840 / 63/290 / NCTC 10512).